Reading from the N-terminus, the 303-residue chain is Mesenteric estrogen-dependent adipogenesis protein (303 aa).

It is found in the cytoplasm. Its function is as follows. Involved in processes that promote adipocyte differentiation, lipid accumulation, and glucose uptake in mature adipocytes. The sequence is that of Mesenteric estrogen-dependent adipogenesis protein (MEDAG) from Bos taurus (Bovine).